The following is a 201-amino-acid chain: Flagellin B1 (201 aa).

Positions methionine 1–glycine 11 are excised as a propeptide.

It belongs to the archaeal flagellin family.

It localises to the archaeal flagellum. Its function is as follows. Flagellin is the subunit protein which polymerizes to form the filaments of archaeal flagella. This Natrialba magadii (strain ATCC 43099 / DSM 3394 / CCM 3739 / CIP 104546 / IAM 13178 / JCM 8861 / NBRC 102185 / NCIMB 2190 / MS3) (Natronobacterium magadii) protein is Flagellin B1 (flaB1).